We begin with the raw amino-acid sequence, 61 residues long: Disintegrin rubistatin (61 aa).

Residues 1–61 enclose the Disintegrin domain; it reads NPCCDAATCK…ADCPRNGLYG (61 aa). Intrachain disulfides connect Cys3-Cys26, Cys17-Cys23, Cys22-Cys47, and Cys35-Cys54. A Cell attachment site; atypical (MVD) motif is present at residues 39–41; it reads MVD.

It belongs to the venom metalloproteinase (M12B) family. P-II subfamily. P-IIa sub-subfamily. As to quaternary structure, monomer. Expressed by the venom gland.

The protein localises to the secreted. Recombinant disintegrin rubistatin inhibits ADP-induced platelet aggregation. In addition, it strongly induces apoptosis, and inhibits cell migration and proliferation of the human cancer cell line SK-Mel-28. This is Disintegrin rubistatin from Crotalus ruber ruber (Red diamond rattlesnake).